Reading from the N-terminus, the 337-residue chain is 5-formaminoimidazole-4-carboxamide-1-(beta)-D-ribofuranosyl 5'-monophosphate synthetase (337 aa).

Residues His23 and Ser87 each coordinate 5-amino-1-(5-phospho-beta-D-ribosyl)imidazole-4-carboxamide. The 208-residue stretch at 121–328 folds into the ATP-grasp domain; the sequence is MRLLEYAGIP…IAHEIVNAVK (208 aa). ATP contacts are provided by residues 144–191 and Glu213; that span reads PVIV…VPAY. A 5-amino-1-(5-phospho-beta-D-ribosyl)imidazole-4-carboxamide-binding site is contributed by Asn233. Mg(2+)-binding residues include Glu272 and Glu285.

It belongs to the phosphohexose mutase family. Mg(2+) is required as a cofactor. It depends on Mn(2+) as a cofactor.

The catalysed reaction is 5-amino-1-(5-phospho-beta-D-ribosyl)imidazole-4-carboxamide + formate + ATP = 5-formamido-1-(5-phospho-D-ribosyl)imidazole-4-carboxamide + ADP + phosphate. It participates in purine metabolism; IMP biosynthesis via de novo pathway; 5-formamido-1-(5-phospho-D-ribosyl)imidazole-4-carboxamide from 5-amino-1-(5-phospho-D-ribosyl)imidazole-4-carboxamide (formate route): step 1/1. Functionally, catalyzes the ATP- and formate-dependent formylation of 5-aminoimidazole-4-carboxamide-1-beta-d-ribofuranosyl 5'-monophosphate (AICAR) to 5-formaminoimidazole-4-carboxamide-1-beta-d-ribofuranosyl 5'-monophosphate (FAICAR) in the absence of folates. The chain is 5-formaminoimidazole-4-carboxamide-1-(beta)-D-ribofuranosyl 5'-monophosphate synthetase from Caldivirga maquilingensis (strain ATCC 700844 / DSM 13496 / JCM 10307 / IC-167).